The following is a 535-amino-acid chain: MSTRDLPHSFSELSYGWVKRIRAEFTVGKSKEQLLAEDYHSTTDEDSEVVTSVKANSLWPAFASGAGLFSDGYVNNSISTVLFCLKKIYPDEITKSNAINNIASIAFVGTVVGQLGFGYISDRIARKGGMMAANVMLIFFTLMCAVGSWGVTVQGFFACLTVWRFFLGVAIGAEYPTSSVIASEFANQLPPGKRNRYFSWFTNAMIDSGFVVSAFVPFVLIWIFTEKHLRALWRVAIGLGVIPPLSLFFMRLKMKNSSSFQKLHMKNVKYRDYPWWLIVKFYWFRLTIVSLIWFIYDFSAYSFGNFNTIIIGEIIPEAPIWKQWGWSIVFNLFYIPGAFLGAISADYIGPRLTLALGVGIQGVIGIAMSACLNSLKKHIAGFVVVFGIFTTFGEFGPGDNIGLLASKTSATAIRGQYYGIAAAIGKIGAFVGTWVFPAIQSKYANNANPDLQLQVPFYISSALCLFSACLAIFFCPQVGQDAIYKEDHDFVQYLSNNGFDINMLGEGGDVREVCRESDSLEKGKRDDFQVDNNSL.

Residues 49–69 (VVTSVKANSLWPAFASGAGLF) traverse the membrane as a helical segment. The N-linked (GlcNAc...) asparagine glycan is linked to Asn75. Helical transmembrane passes span 101-121 (NIAS…GYIS), 137-157 (LIFF…QGFF), 165-185 (FFLG…ASEF), 204-224 (AMID…IWIF), and 232-252 (LWRV…FMRL). Asn256 carries an N-linked (GlcNAc...) asparagine glycan. 6 helical membrane-spanning segments follow: residues 275–295 (WWLI…IWFI), 324–344 (WGWS…GAIS), 352–372 (LTLA…SACL), 378–398 (HIAG…FGPG), 419–439 (GIAA…FPAI), and 455–475 (VPFY…IFFC). Asn532 carries N-linked (GlcNAc...) asparagine glycosylation.

It belongs to the major facilitator superfamily. Sugar transporter (TC 2.A.1.1) family.

The protein resides in the cell membrane. It catalyses the reaction sn-glycerol 3-phosphocholine(out) = sn-glycerol 3-phosphocholine(in). Glycerophosphodiester transporter that mediates uptake of glycerophosphocholine (GroPCho) with GIT4. GIT3 acts as the major GroPCho permease. Does not possess detectable glycerophosphoinositol (GroPIns) transport activity. The expanded ability to utilize GroPIns and GroPCho results from the organism's pathogenic nature and its need to occupy a variety of environments within its host organism. This possibility is buttressed by the fact that GroPIns and GroPCho are present and abundant in human fluids. This is Major glycerophosphoinositol permease GIT3 from Candida albicans (strain SC5314 / ATCC MYA-2876) (Yeast).